A 612-amino-acid polypeptide reads, in one-letter code: UvrABC system protein C (612 aa).

The GIY-YIG domain occupies 20–98 (THSGVYRMLD…IKQHRPKYNI (79 aa)). A UVR domain is found at 208-243 (SSVLEEISANMYQASEDMEYEKAQVYRDQLVVLRKL).

This sequence belongs to the UvrC family. Interacts with UvrB in an incision complex.

The protein localises to the cytoplasm. In terms of biological role, the UvrABC repair system catalyzes the recognition and processing of DNA lesions. UvrC both incises the 5' and 3' sides of the lesion. The N-terminal half is responsible for the 3' incision and the C-terminal half is responsible for the 5' incision. The protein is UvrABC system protein C of Francisella tularensis subsp. holarctica (strain LVS).